A 441-amino-acid polypeptide reads, in one-letter code: MPYFDNISTIAYEGPASKNPLAFKFYNPEEKVGDKTMEEHLRFSVAYWHTFTGDGSDPFGAGNMIRPWNKYSGMDLAKARVEAAFEFFEKLNIPFFCFHDVDIAPEGETLKETYKNLDIIVDMIEEYMKTSKTKLLWNTANLFTHPRFVHGAATSCNADVFAYAAAKVKKGLEIAKRLGAENYVFWGGREGYETLLNTDMKLELDNLARFLHMAVDYAKEIGFDGQFLIEPKPKEPTKHQYDFDVATALAFLQTYGLKDYFKFNIEANHATLAGHTFEHELRVARIHGMLGSVDANQGDMLLGWDTDEFPTDLYSTTLAMYEILKNGGLGRGGLNFDAKVRRGSFEPEDLFYAHIAGMDSFAVGLKVAHRLIEDRVFDEFIEERYKSYTEGIGREIVEGTADFHKLEAHALQLGEIQNQSGRQERLKTLLNQYLLEVCAAR.

Catalysis depends on residues His99 and Asp102. The Mn(2+) site is built by Glu230, Glu266, Asp294, Asp305, Asp307, and Asp337.

This sequence belongs to the xylose isomerase family. In terms of assembly, homotetramer. Mn(2+) is required as a cofactor.

It is found in the cytoplasm. It catalyses the reaction alpha-D-xylose = alpha-D-xylulofuranose. The protein is Xylose isomerase (xylA) of Geobacillus stearothermophilus (Bacillus stearothermophilus).